The following is a 149-amino-acid chain: Large ribosomal subunit protein uL13 (149 aa).

The protein belongs to the universal ribosomal protein uL13 family. In terms of assembly, part of the 50S ribosomal subunit.

Its function is as follows. This protein is one of the early assembly proteins of the 50S ribosomal subunit, although it is not seen to bind rRNA by itself. It is important during the early stages of 50S assembly. The protein is Large ribosomal subunit protein uL13 of Chlamydia pneumoniae (Chlamydophila pneumoniae).